The sequence spans 369 residues: Choline-phosphate cytidylyltransferase B (369 aa).

Positions 1–27 (MPVLTTDAESETGIPKSLSNEPPSETM) are disordered. Positions 84, 85, 92, and 122 each coordinate CTP. Phosphocholine-binding residues include Lys122 and Trp151. CTP contacts are provided by His168, Asp169, Tyr173, Gln195, Arg196, Thr197, and Ile200. The disordered stretch occupies residues 309-369 (RMLQALSPKQ…SMSEGDEDEK (61 aa)). 7 positions are modified to phosphoserine: Ser315, Ser319, Ser322, Ser323, Ser329, Ser331, and Ser335. The span at 319 to 339 (SPVSSPTRSRSPSRSPSPTFS) shows a compositional bias: low complexity. Position 345 is a phosphothreonine (Thr345). Residues Ser346, Ser349, Ser350, Ser355, Ser360, and Ser362 each carry the phosphoserine modification. The span at 351-362 (PKAASASISSMS) shows a compositional bias: low complexity.

Belongs to the cytidylyltransferase family. As to quaternary structure, homodimer. As to expression, highly expressed in brain (at protein level). Expressed in liver (at protein level). Expressed at lower levels in lung and gonads. In terms of tissue distribution, expressed in brain (at protein level). Expressed at lower levels in lung and gonads.

It localises to the endoplasmic reticulum. The protein resides in the cytoplasm. It carries out the reaction phosphocholine + CTP + H(+) = CDP-choline + diphosphate. It participates in phospholipid metabolism; phosphatidylcholine biosynthesis; phosphatidylcholine from phosphocholine: step 1/2. In terms of biological role, catalyzes the key rate-limiting step in the CDP-choline pathway for phosphatidylcholine biosynthesis. Plays an important role in ovary maturation and the maintenance of sperm production. Catalyzes the key rate-limiting step in the CDP-choline pathway for phosphatidylcholine biosynthesis. This Mus musculus (Mouse) protein is Choline-phosphate cytidylyltransferase B (Pcyt1b).